We begin with the raw amino-acid sequence, 379 residues long: uncharacterized protein (379 aa).

The helical transmembrane segment at 7-27 threads the bilayer; sequence VYIFAGIFLFIALIILIKIFF.

Its subcellular location is the membrane. This is an uncharacterized protein from Caenorhabditis elegans.